The primary structure comprises 161 residues: ATP synthase subunit b 1 (161 aa).

Residues 3–23 (FDASFFALVGLVLFFVLIAYL) form a helical membrane-spanning segment.

This sequence belongs to the ATPase B chain family. As to quaternary structure, F-type ATPases have 2 components, F(1) - the catalytic core - and F(0) - the membrane proton channel. F(1) has five subunits: alpha(3), beta(3), gamma(1), delta(1), epsilon(1). F(0) has three main subunits: a(1), b(2) and c(10-14). The alpha and beta chains form an alternating ring which encloses part of the gamma chain. F(1) is attached to F(0) by a central stalk formed by the gamma and epsilon chains, while a peripheral stalk is formed by the delta and b chains.

Its subcellular location is the cell inner membrane. Its function is as follows. F(1)F(0) ATP synthase produces ATP from ADP in the presence of a proton or sodium gradient. F-type ATPases consist of two structural domains, F(1) containing the extramembraneous catalytic core and F(0) containing the membrane proton channel, linked together by a central stalk and a peripheral stalk. During catalysis, ATP synthesis in the catalytic domain of F(1) is coupled via a rotary mechanism of the central stalk subunits to proton translocation. Functionally, component of the F(0) channel, it forms part of the peripheral stalk, linking F(1) to F(0). The polypeptide is ATP synthase subunit b 1 (Agrobacterium fabrum (strain C58 / ATCC 33970) (Agrobacterium tumefaciens (strain C58))).